A 72-amino-acid chain; its full sequence is Translation initiation factor IF-1 (72 aa).

The S1-like domain occupies 2–72; that stretch reads AKDDVIEVEG…TRGRITYRYK (71 aa). Phosphotyrosine is present on tyrosine 60.

Belongs to the IF-1 family. In terms of assembly, component of the 30S ribosomal translation pre-initiation complex which assembles on the 30S ribosome in the order IF-2 and IF-3, IF-1 and N-formylmethionyl-tRNA(fMet); mRNA recruitment can occur at any time during PIC assembly.

It is found in the cytoplasm. Its function is as follows. One of the essential components for the initiation of protein synthesis. Stabilizes the binding of IF-2 and IF-3 on the 30S subunit to which N-formylmethionyl-tRNA(fMet) subsequently binds. Helps modulate mRNA selection, yielding the 30S pre-initiation complex (PIC). Upon addition of the 50S ribosomal subunit IF-1, IF-2 and IF-3 are released leaving the mature 70S translation initiation complex. The sequence is that of Translation initiation factor IF-1 from Bacillus subtilis (strain 168).